The following is a 379-amino-acid chain: Deoxyguanosinetriphosphate triphosphohydrolase-like protein (379 aa).

One can recognise an HD domain in the interval 69-200; the sequence is RLTHTIEVAQ…ANLADEIAYS (132 aa).

Belongs to the dGTPase family. Type 2 subfamily.

The protein is Deoxyguanosinetriphosphate triphosphohydrolase-like protein of Azoarcus sp. (strain BH72).